Reading from the N-terminus, the 508-residue chain is Hydroxymethylglutaryl-CoA synthase, mitochondrial (508 aa).

The N-terminal 37 residues, 1-37 (MQRLLAPARRVLQVKRVMQESSLSPAHLLPAAQQRFS), are a transit peptide targeting the mitochondrion. Lys-52 is subject to N6-succinyllysine. (3S)-3-hydroxy-3-methylglutaryl-CoA is bound by residues Glu-80 and Ala-81. N6-acetyllysine; alternate is present on residues Lys-83 and Lys-118. An N6-succinyllysine; alternate mark is found at Lys-83 and Lys-118. Glu-132 acts as the Proton donor/acceptor in catalysis. (3S)-3-hydroxy-3-methylglutaryl-CoA contacts are provided by Cys-166, Asn-204, and Thr-208. Cys-166 functions as the Acyl-thioester intermediate in the catalytic mechanism. Position 221 is an N6-succinyllysine (Lys-221). Lys-243 bears the N6-acetyllysine mark. The residue at position 256 (Lys-256) is an N6-acetyllysine; alternate. Lys-256 is modified (N6-succinyllysine; alternate). (3S)-3-hydroxy-3-methylglutaryl-CoA-binding residues include Ser-258 and His-301. His-301 (proton donor/acceptor) is an active-site residue. Position 306 is an N6-acetyllysine (Lys-306). Position 310 (Lys-310) interacts with (3S)-3-hydroxy-3-methylglutaryl-CoA. An N6-acetyllysine; alternate mark is found at Lys-310 and Lys-327. An N6-succinyllysine; alternate mark is found at Lys-310 and Lys-327. The residue at position 333 (Lys-333) is an N6-succinyllysine. Lys-342, Lys-350, Lys-354, and Lys-358 each carry N6-acetyllysine; alternate. N6-succinyllysine; alternate occurs at positions 342, 350, 354, and 358. Residues Asn-380 and Ser-414 each contribute to the (3S)-3-hydroxy-3-methylglutaryl-CoA site. N6-acetyllysine is present on Lys-427. Ser-433 carries the phosphoserine modification. N6-acetyllysine is present on Lys-437. A Phosphoserine modification is found at Ser-440. Lys-447 carries the N6-acetyllysine; alternate modification. The residue at position 447 (Lys-447) is an N6-succinyllysine; alternate. Ser-456 is modified (phosphoserine). Residue Lys-473 is modified to N6-acetyllysine; alternate. At Lys-473 the chain carries N6-succinyllysine; alternate. Ser-477 is modified (phosphoserine).

It belongs to the thiolase-like superfamily. HMG-CoA synthase family. As to quaternary structure, homodimer. Succinylated. Desuccinylated by SIRT5. Succinylation, at least at Lys-83 and Lys-310, inhibits the enzymatic activity. In terms of tissue distribution, liver and kidney.

It localises to the mitochondrion. The enzyme catalyses acetoacetyl-CoA + acetyl-CoA + H2O = (3S)-3-hydroxy-3-methylglutaryl-CoA + CoA + H(+). The protein operates within metabolic intermediate biosynthesis; (R)-mevalonate biosynthesis; (R)-mevalonate from acetyl-CoA: step 2/3. Catalyzes the first irreversible step in ketogenesis, condensing acetyl-CoA to acetoacetyl-CoA to form HMG-CoA, which is converted by HMG-CoA reductase (HMGCR) into mevalonate. The polypeptide is Hydroxymethylglutaryl-CoA synthase, mitochondrial (Hmgcs2) (Rattus norvegicus (Rat)).